We begin with the raw amino-acid sequence, 192 residues long: Zinc finger CCHC domain-containing protein 10 (192 aa).

The segment at 43–60 (VRCQKCLEFGHWTYECTG) adopts a CCHC-type zinc-finger fold. The interval 89–192 (QSIGETNVER…DEPPKKKKKK (104 aa)) is disordered. Low complexity-rich tracts occupy residues 109–136 (TSSSSSSSDSSASDSSSESEETSTSSSS) and 144–179 (SSSSSSSSASSTTSSSSSDSDSDSSSSSSSSTSTDS).

The polypeptide is Zinc finger CCHC domain-containing protein 10 (ZCCHC10) (Homo sapiens (Human)).